We begin with the raw amino-acid sequence, 341 residues long: Phosphate acyltransferase (341 aa).

Belongs to the PlsX family. Homodimer. Probably interacts with PlsY.

The protein resides in the cytoplasm. The catalysed reaction is a fatty acyl-[ACP] + phosphate = an acyl phosphate + holo-[ACP]. The protein operates within lipid metabolism; phospholipid metabolism. Functionally, catalyzes the reversible formation of acyl-phosphate (acyl-PO(4)) from acyl-[acyl-carrier-protein] (acyl-ACP). This enzyme utilizes acyl-ACP as fatty acyl donor, but not acyl-CoA. The sequence is that of Phosphate acyltransferase from Aliivibrio salmonicida (strain LFI1238) (Vibrio salmonicida (strain LFI1238)).